The primary structure comprises 655 residues: Alpha-L-iduronidase (655 aa).

Residues 1 to 25 (MRPPGPRAPGLALLAALLAAPRALA) form the signal peptide. Residues P53, L55, and H57 each coordinate alpha-D-mannopyranose. Residue H90 participates in alpha-L-iduronate binding. Residue N109 is glycosylated (N-linked (GlcNAc...) asparagine). Alpha-L-iduronate-binding residues include N180 and E181. E181 acts as the Proton donor in catalysis. N-linked (GlcNAc...) asparagine glycosylation is found at N189 and N242. Alpha-L-iduronate contacts are provided by K263, E298, and G304. The active-site Nucleophile is the E298. W305 serves as a coordination point for alpha-D-mannopyranose. An N-linked (GlcNAc...) asparagine glycan is attached at N335. Alpha-L-iduronate is bound by residues D348 and R362. N-linked (GlcNAc...) asparagine glycosylation is found at N371 and N414. A disulfide bridge connects residues C540 and C576.

Belongs to the glycosyl hydrolase 39 family. In terms of assembly, monomer. Post-translationally, a smaller 63 kDa protein probably arises from IDUA protein by proteolytic cleavage. N-glycosylation contributes to substrate binding and is required for full enzymatic activity. Detected in testis (at protein level). Expressed ubiquitously.

It is found in the lysosome. It catalyses the reaction Hydrolysis of unsulfated alpha-L-iduronosidic linkages in dermatan sulfate.. This chain is Alpha-L-iduronidase (IDUA), found in Canis lupus familiaris (Dog).